The chain runs to 127 residues: uncharacterized protein (127 aa).

This is an uncharacterized protein from Rickettsia conorii (strain ATCC VR-613 / Malish 7).